The sequence spans 277 residues: Large ribosomal subunit protein uL2 (277 aa).

2 disordered regions span residues Lys-32–Gly-58 and Val-225–Lys-277. The span at Tyr-258 to Lys-277 shows a compositional bias: basic residues.

The protein belongs to the universal ribosomal protein uL2 family. As to quaternary structure, part of the 50S ribosomal subunit. Forms a bridge to the 30S subunit in the 70S ribosome.

In terms of biological role, one of the primary rRNA binding proteins. Required for association of the 30S and 50S subunits to form the 70S ribosome, for tRNA binding and peptide bond formation. It has been suggested to have peptidyltransferase activity; this is somewhat controversial. Makes several contacts with the 16S rRNA in the 70S ribosome. In Borrelia garinii subsp. bavariensis (strain ATCC BAA-2496 / DSM 23469 / PBi) (Borreliella bavariensis), this protein is Large ribosomal subunit protein uL2.